Here is a 210-residue protein sequence, read N- to C-terminus: MSVGILGTKLGMTQIFDEAGVAIPVTVIQAGPCTVTQVKTKQTDGYFAIQVGFGEVKPKALNRPLLGHLAKSSAPALRHLNEYHTDSSSDYALGQQIKADIFSEGQIVDVVGTSIGRGFAGNQKRNNFGRGPMSHGSKNHRAPGSIGAGTTPGRVYPGKRMAGRLGGKRITIRKLTIVRVDAERNLLLIKGAIPGKPGALVSVVPAKVVG.

The disordered stretch occupies residues 122-155 (NQKRNNFGRGPMSHGSKNHRAPGSIGAGTTPGRV).

Belongs to the universal ribosomal protein uL3 family. Part of the 50S ribosomal subunit. Forms a cluster with proteins L14 and L19.

One of the primary rRNA binding proteins, it binds directly near the 3'-end of the 23S rRNA, where it nucleates assembly of the 50S subunit. The protein is Large ribosomal subunit protein uL3 of Nostoc punctiforme (strain ATCC 29133 / PCC 73102).